The primary structure comprises 765 residues: 5-methyltetrahydropteroyltriglutamate--homocysteine methyltransferase 1 (765 aa).

Lys18 and Asn116 together coordinate 5-methyltetrahydropteroyltri-L-glutamate. Ile437–Ser439 serves as a coordination point for L-homocysteine. Residues Ile437 to Ser439 and Glu490 each bind L-methionine. 5-methyltetrahydropteroyltri-L-glutamate contacts are provided by residues Arg521–Cys522 and Trp567. L-homocysteine is bound at residue Asp605. Asp605 serves as a coordination point for L-methionine. Positions 647, 649, 658, 662, and 671 each coordinate Zn(2+). Residue His701 is the Proton donor of the active site. Cys733 serves as a coordination point for Zn(2+).

This sequence belongs to the vitamin-B12 independent methionine synthase family. It depends on Zn(2+) as a cofactor. In terms of tissue distribution, expressed in leaves, stems, flowers, siliques and seeds.

The protein localises to the cytoplasm. It is found in the cytosol. It carries out the reaction 5-methyltetrahydropteroyltri-L-glutamate + L-homocysteine = tetrahydropteroyltri-L-glutamate + L-methionine. It functions in the pathway amino-acid biosynthesis; L-methionine biosynthesis via de novo pathway; L-methionine from L-homocysteine (MetE route): step 1/1. Catalyzes the transfer of a methyl group from 5-methyltetrahydrofolate to homocysteine resulting in methionine formation. The chain is 5-methyltetrahydropteroyltriglutamate--homocysteine methyltransferase 1 (MS1) from Arabidopsis thaliana (Mouse-ear cress).